Consider the following 585-residue polypeptide: Rhizobactin siderophore biosynthesis protein RhbC (585 aa).

It belongs to the IucA/IucC family.

It participates in siderophore biosynthesis; rhizobactin biosynthesis. This Rhizobium meliloti (strain 1021) (Ensifer meliloti) protein is Rhizobactin siderophore biosynthesis protein RhbC (rhbC).